The following is a 211-amino-acid chain: Uracil phosphoribosyltransferase (211 aa).

Residues R78, R103, and 130 to 138 (DPMLATGGT) contribute to the 5-phospho-alpha-D-ribose 1-diphosphate site. Residues I195 and 200 to 202 (GDA) contribute to the uracil site. D201 is a 5-phospho-alpha-D-ribose 1-diphosphate binding site.

It belongs to the UPRTase family. It depends on Mg(2+) as a cofactor.

It carries out the reaction UMP + diphosphate = 5-phospho-alpha-D-ribose 1-diphosphate + uracil. It functions in the pathway pyrimidine metabolism; UMP biosynthesis via salvage pathway; UMP from uracil: step 1/1. Its activity is regulated as follows. Allosterically activated by GTP. In terms of biological role, catalyzes the conversion of uracil and 5-phospho-alpha-D-ribose 1-diphosphate (PRPP) to UMP and diphosphate. The sequence is that of Uracil phosphoribosyltransferase from Kocuria rhizophila (strain ATCC 9341 / DSM 348 / NBRC 103217 / DC2201).